A 662-amino-acid chain; its full sequence is MTIPKSSTGQSYPPVLDYRIVQLIGGGGFSKVFRAVNPSSESHSVAAIKVISYAPNRSNKYPIDRRALQKEVQVHSILKHPNVLEFLGAVERGVDKNGNAGKEKGILMGEAVATTKESIRARDKERQQMLSSPSHDQNYVPGLYMVLELGAGGDLFDKIAPDYGVEEDLAHFYFQQLLAGLEYIHSQGVTHRDIKPENMLLDAEGNLKIADFGLCSVYKYKGKERELTGACGSLPYIAPEMNGKPYRGEPVDVWSSGVVLFAMLVGSTPWDEPTSRSPEYSAYRTGKLFEYDPWPRIPQDALSLLKKMMHPTPEKRITFEGIRRHRWFKRANDLMTQKGKCNDPVNLAEKLLQGLAVSGDIIVEVNGAAAAAARRLDLHSDGQRAQVPENVSLTQPDAILTSSFDLAARAVARGWADDTGPGGGLPLPSSTAMPAFASDDMSRRLAMSQHISSRRAEFSTTASGSGYDMALPGASQFTQALNHFTQFEALTHVAGTGSSHLRFSPHLTRFFSSASAATILALIIDVLDRLAVLNAHQAIGDQEELELEEAYNFMADGEPETTVPSDDSSRPTGGSKRLLIGSRGARIRLKTMDRRKCVLRGEVYVENLAAPDSTSDSASAPDRNAAKCLVVMKKGKGDPLEWRRLFREVCRRPEIMQTIIST.

Positions 18-328 (YRIVQLIGGG…FEGIRRHRWF (311 aa)) constitute a Protein kinase domain. Residues 24–32 (IGGGGFSKV) and K49 each bind ATP. Catalysis depends on D193, which acts as the Proton acceptor. The interval 557-577 (GEPETTVPSDDSSRPTGGSKR) is disordered. A compositionally biased stretch (polar residues) spans 562 to 572 (TVPSDDSSRPT).

The protein belongs to the protein kinase superfamily. CAMK Ser/Thr protein kinase family. NIM1 subfamily. In terms of processing, phosphorylated.

The protein localises to the nucleus. It catalyses the reaction L-seryl-[protein] + ATP = O-phospho-L-seryl-[protein] + ADP + H(+). It carries out the reaction L-threonyl-[protein] + ATP = O-phospho-L-threonyl-[protein] + ADP + H(+). Its function is as follows. Serine/threonine-protein kinase which is required for checkpoint-mediated cell cycle arrest and activation of DNA repair in response to the presence of DNA damage or unreplicated DNA. May also negatively regulate cell cycle progression during unperturbed cell cycles. This chain is Serine/threonine-protein kinase CHK1 (CHK1), found in Mycosarcoma maydis (Corn smut fungus).